A 432-amino-acid chain; its full sequence is Polypyrimidine tract-binding protein homolog 3 (432 aa).

4 RRM domains span residues 6-80, 98-187, 245-319, and 355-429; these read KVVH…FSSH, NRIL…YNND, CTVL…FSKH, and KMIH…FSQL.

The protein resides in the nucleus. Functionally, plays a role in pre-mRNA splicing. Binds to the polypyrimidine tract of introns. May promote the binding of U2 snRNP to pre-mRNA. The protein is Polypyrimidine tract-binding protein homolog 3 of Arabidopsis thaliana (Mouse-ear cress).